A 284-amino-acid polypeptide reads, in one-letter code: Bifunctional protein FolD (284 aa).

166 to 168 (GAS) serves as a coordination point for NADP(+).

Belongs to the tetrahydrofolate dehydrogenase/cyclohydrolase family. Homodimer.

The enzyme catalyses (6R)-5,10-methylene-5,6,7,8-tetrahydrofolate + NADP(+) = (6R)-5,10-methenyltetrahydrofolate + NADPH. The catalysed reaction is (6R)-5,10-methenyltetrahydrofolate + H2O = (6R)-10-formyltetrahydrofolate + H(+). The protein operates within one-carbon metabolism; tetrahydrofolate interconversion. Catalyzes the oxidation of 5,10-methylenetetrahydrofolate to 5,10-methenyltetrahydrofolate and then the hydrolysis of 5,10-methenyltetrahydrofolate to 10-formyltetrahydrofolate. This chain is Bifunctional protein FolD, found in Nitrosococcus oceani (strain ATCC 19707 / BCRC 17464 / JCM 30415 / NCIMB 11848 / C-107).